Reading from the N-terminus, the 260-residue chain is Kallikrein-8 (260 aa).

Positions 1–28 are cleaved as a signal peptide; that stretch reads MGRPRPRAAKTWMFLLLLGGAWAGHSRA. Residues 29-32 constitute a propeptide that is removed on maturation; that stretch reads QEDK. A Peptidase S1 domain is found at 33 to 257; sequence VLGGHECQPH…YLDWIKKIIG (225 aa). 6 disulfide bridges follow: C39–C173, C58–C74, C145–C246, C152–C218, C184–C198, and C208–C233. The active-site Charge relay system is the H73. The N-linked (GlcNAc...) asparagine glycan is linked to N110. The Charge relay system role is filled by D120. S212 functions as the Charge relay system in the catalytic mechanism.

The protein belongs to the peptidase S1 family. Kallikrein subfamily. In terms of assembly, interacts with SPINK9. Isoform 1 is predominantly expressed in the pancreas. Isoform 2 is expressed in adult brain and hippocampus. Isoform 1 and isoform 2 are found in fetal brain and placenta. Detected in salivary gland, uterus, thymus, breast, testis and kidney but not in spleen, liver, lung or normal ovarian tissue. Displays an 11.5-fold increase in Alzheimer disease hippocampus compared to controls and is overexpressed in some ovarian carcinomas. Expressed at low levels in normal skin while high levels are found in psoriasis vulgaris, seborrheic keratosis, lichen planus and squamous cell carcinoma skin samples. Expressed in the keratinocytes.

Its subcellular location is the secreted. It is found in the cytoplasm. The catalysed reaction is Cleavage of amide substrates following the basic amino acids Arg or Lys at the P1 position, with a preference for Arg over Lys.. Inhibited by a range of serine protease inhibitors including antipain, aprotinin, leupeptin, benzamidine and soybean trypsin inhibitor. Functionally, serine protease which is capable of degrading a number of proteins such as casein, fibrinogen, kininogen, fibronectin and collagen type IV. Also cleaves L1CAM in response to increased neural activity. Induces neurite outgrowth and fasciculation of cultured hippocampal neurons. Plays a role in the formation and maturation of orphan and small synaptic boutons in the Schaffer-collateral pathway, regulates Schaffer-collateral long-term potentiation in the hippocampus and is required for memory acquisition and synaptic plasticity. Involved in skin desquamation and keratinocyte proliferation. Plays a role in the secondary phase of pathogenesis following spinal cord injury. The chain is Kallikrein-8 (KLK8) from Homo sapiens (Human).